The following is a 361-amino-acid chain: Chorismate synthase (361 aa).

2 residues coordinate NADP(+): R48 and R54. Residues 125–127 (RSS), 238–239 (NA), G278, 293–297 (KPTSS), and R319 contribute to the FMN site.

Belongs to the chorismate synthase family. In terms of assembly, homotetramer. FMNH2 is required as a cofactor.

The catalysed reaction is 5-O-(1-carboxyvinyl)-3-phosphoshikimate = chorismate + phosphate. It participates in metabolic intermediate biosynthesis; chorismate biosynthesis; chorismate from D-erythrose 4-phosphate and phosphoenolpyruvate: step 7/7. Its function is as follows. Catalyzes the anti-1,4-elimination of the C-3 phosphate and the C-6 proR hydrogen from 5-enolpyruvylshikimate-3-phosphate (EPSP) to yield chorismate, which is the branch point compound that serves as the starting substrate for the three terminal pathways of aromatic amino acid biosynthesis. This reaction introduces a second double bond into the aromatic ring system. The protein is Chorismate synthase of Escherichia coli O1:K1 / APEC.